Consider the following 650-residue polypeptide: MEVKIEETDWDEGVPGISFLKDAFSREEISPPKDDKNRKKEEVRMKLESGEYSVVYRCPTFDEILNENGQKIDLVQCKNCFGFLSARTGGHMKNHKNQRCKPLNGPPEKKPKLDPQVVGNLQNHILDFVTESGVSLNIAESEKFRIFIISMIITGNPNVNVDEHQFLSGEWIRKTMKEKSCQYLDNIGAELKDPVSKGDACLILDYGRQLDDTFSIFVSYTNRSSGYFSLRVIPLAFTPLFEKKITEKTLDYILHATDRVGLPKEHVLKLKVVAEGATNMLKLGEYFDNCNLFTVCLSFSSKMCRKSFRSTETVEKFDNFIRKITCESDRKRNRNLWNDFLQTPALQSLINIYVLSLILLCFQLTEQLSRTPAQSRANEWLASYHCARDILHVFPQIADLKDDRIEPLVDELRQCKGVLEDCFEIFSLFENPLKLLEQPEQQIQNVAGVMFELYAQLDRIYIKAVDPKQPKECLAAVAKMAKLSIAHYTKITVTDVHLICAFLSPDSKNLKNFPAPKKNKAYRIVNTLMKDVVVPPPSLSQPILSPLLMAIKNDPSPIPTVSQEFNDYVQLVVSSKDATLAPLEFWAKYQERFPRMSEIAAKNFCVMSSPGVCGPSFIVLRSLFRVDRHSKFPDTTELMMISYLMANELK.

This is an uncharacterized protein from Caenorhabditis elegans.